Consider the following 159-residue polypeptide: Defense protein l(2)34Fc (159 aa).

Residues 1–17 (MFRLLVLAACLAISVHA) form the signal peptide. One can recognise a Reelin domain in the interval 18–159 (YSDGAPKAAC…GRVTKDIDVE (142 aa)). Cys-27 and Cys-99 are joined by a disulfide.

The protein belongs to the insect defense protein family.

Its subcellular location is the secreted. Its function is as follows. May have antimicrobial activity. A late response immune regulated gene that is negatively regulated by spz during the immune response. The sequence is that of Defense protein l(2)34Fc (l(2)34Fc) from Drosophila melanogaster (Fruit fly).